Here is a 346-residue protein sequence, read N- to C-terminus: c-di-GMP synthase (346 aa).

Belongs to the CD-NTase family.

It carries out the reaction 2 GTP = 3',3'-c-di-GMP + 2 diphosphate. Its function is as follows. Cyclic nucleotide synthase (second messenger synthase) of a CBASS antivirus system. CBASS (cyclic oligonucleotide-based antiphage signaling system) provides immunity against bacteriophage. The CD-NTase protein synthesizes cyclic nucleotides in response to infection; these serve as specific second messenger signals. The signals activate a diverse range of effectors, leading to bacterial cell death and thus abortive phage infection. A type I-D(GG) CBASS system. Functionally, cyclic dinucleotide synthase that catalyzes the synthesis of c-di-GMP, has no activity with other NTP substrates. The protein is c-di-GMP synthase of Lachnospiraceae bacterium (strain RUG226).